The sequence spans 417 residues: Multifunctional CCA protein (417 aa).

The ATP site is built by glycine 8 and arginine 11. Positions 8 and 11 each coordinate CTP. Positions 21 and 23 each coordinate Mg(2+). Residues arginine 91, arginine 143, and arginine 146 each contribute to the ATP site. Arginine 91, arginine 143, and arginine 146 together coordinate CTP. Positions 232 to 333 (TGVHVMMVVD…VRLFERSDAL (102 aa)) constitute an HD domain.

This sequence belongs to the tRNA nucleotidyltransferase/poly(A) polymerase family. Bacterial CCA-adding enzyme type 1 subfamily. In terms of assembly, monomer. Can also form homodimers and oligomers. It depends on Mg(2+) as a cofactor. The cofactor is Ni(2+).

It catalyses the reaction a tRNA precursor + 2 CTP + ATP = a tRNA with a 3' CCA end + 3 diphosphate. The enzyme catalyses a tRNA with a 3' CCA end + 2 CTP + ATP = a tRNA with a 3' CCACCA end + 3 diphosphate. Its function is as follows. Catalyzes the addition and repair of the essential 3'-terminal CCA sequence in tRNAs without using a nucleic acid template. Adds these three nucleotides in the order of C, C, and A to the tRNA nucleotide-73, using CTP and ATP as substrates and producing inorganic pyrophosphate. tRNA 3'-terminal CCA addition is required both for tRNA processing and repair. Also involved in tRNA surveillance by mediating tandem CCA addition to generate a CCACCA at the 3' terminus of unstable tRNAs. While stable tRNAs receive only 3'-terminal CCA, unstable tRNAs are marked with CCACCA and rapidly degraded. The polypeptide is Multifunctional CCA protein (Paraburkholderia phymatum (strain DSM 17167 / CIP 108236 / LMG 21445 / STM815) (Burkholderia phymatum)).